The chain runs to 159 residues: MDFRVMGLESPLFHTLQHMMDMSEDGAGDNKTHNAPTWSYVRDAKAMAATPADVKEYPNSYVFEIDMPGLKSGDIKVQVEDDNLLLICGERKRDEEKEGAKYLRMERRVGKLMRKFVLPENANTDAISAVCQDGVLSVTVQKLPPPEPKKPRTIQVKVA.

The sHSP domain maps to aspartate 43–lysine 157.

Belongs to the small heat shock protein (HSP20) family.

It localises to the cytoplasm. This is 17.9 kDa class II heat shock protein (HSP17.9-D) from Glycine max (Soybean).